The sequence spans 249 residues: Zinc finger AN1 and C2H2 domain-containing stress-associated protein 13 (249 aa).

2 AN1-type zinc fingers span residues 7–55 (PDLG…RGDV) and 95–145 (AVKK…KPES). Zn(2+) is bound by residues Cys13, Cys18, Cys28, Cys31, Cys36, His39, His45, Cys47, Cys101, Cys106, Cys118, Cys121, Cys126, His129, His135, and Cys137. Positions 194–213 (FASGNDGNSEKTQERNGKQN) are disordered. Over residues 201–210 (NSEKTQERNG) the composition is skewed to basic and acidic residues. Residues 220-243 (DVCPKCSRGFRDPVDLLKHIDKDH) form a C2H2-type zinc finger.

In terms of biological role, may be involved in environmental stress response. This Arabidopsis thaliana (Mouse-ear cress) protein is Zinc finger AN1 and C2H2 domain-containing stress-associated protein 13 (SAP13).